The primary structure comprises 116 residues: MSLQEKFDAAVEIIQKLPKTGPVATSNDQKLTFYSLFKQASIGDVNTDRPGIFSIIERKKWDSWKELEGVSQDEAKERYIKALNDMFDKIAEELDVAAWLEQIDPVIKTNLALIGK.

In terms of domain architecture, ACB spans 3–92 (LQEKFDAAVE…LNDMFDKIAE (90 aa)). An acyl-CoA-binding positions include 34–38 (YSLFK), Lys60, and Tyr79.

This sequence belongs to the ACBP family.

Functionally, binds medium- and long-chain acyl-CoA esters with very high affinity and may function as an intracellular carrier of acyl-CoA esters. This is Acyl-CoA-binding protein homolog 3 (acbp-3) from Caenorhabditis elegans.